The following is a 540-amino-acid chain: 2,3-bisphosphoglycerate-independent phosphoglycerate mutase (540 aa).

Mn(2+)-binding residues include Asp-24 and Ser-74. Residue Ser-74 is the Phosphoserine intermediate of the active site. Substrate contacts are provided by residues His-135, Arg-165 to Asp-166, Arg-197, Arg-203, Arg-268 to Arg-271, and Lys-341. Mn(2+) is bound by residues Asp-408, His-412, Asp-449, His-450, and His-467.

It belongs to the BPG-independent phosphoglycerate mutase family. As to quaternary structure, monomer. Mn(2+) serves as cofactor.

It carries out the reaction (2R)-2-phosphoglycerate = (2R)-3-phosphoglycerate. The protein operates within carbohydrate degradation; glycolysis; pyruvate from D-glyceraldehyde 3-phosphate: step 3/5. Catalyzes the interconversion of 2-phosphoglycerate and 3-phosphoglycerate. This is 2,3-bisphosphoglycerate-independent phosphoglycerate mutase from Prochlorococcus marinus (strain MIT 9313).